A 580-amino-acid chain; its full sequence is Phosphatase and actin regulator 1 (580 aa).

Phosphoserine is present on residues serine 67 and serine 78. Position 104 is a phosphothreonine (threonine 104). Residues 108–129 (RRRSKFANLGRIFKPWKWRKKK) carry the Nuclear localization signal motif. The RPEL 1 repeat unit spans residues 138 to 163 (AALERKISMRQSREELIKRGVLKEIY). Disordered stretches follow at residues 330–350 (SEQRVPCSTSYHSSGLHSSDG) and 374–408 (DNKENVPHEPDYEDSPCLYGREEEEEEEDEDDDAS). Residues 337-348 (STSYHSSGLHSS) show a composition bias toward low complexity. A compositionally biased stretch (basic and acidic residues) spans 374–383 (DNKENVPHEP). Residues 395–407 (EEEEEEEDEDDDA) show a composition bias toward acidic residues. RPEL repeat units lie at residues 422–447 (DSLAIKLSNRPSKRELEEKNILPRQT), 460–485 (TKLTRRLSQRPTAEELEQRNILKPRN), and 498–523 (RRLTRKLSQRPTVEELRERKILIRFS). Residues 463-494 (TRRLSQRPTAEELEQRNILKPRNEQEEQEEKR) form a disordered region. Serine 467 is subject to Phosphoserine. A compositionally biased stretch (basic and acidic residues) spans 471–494 (TAEELEQRNILKPRNEQEEQEEKR). Serine 505 bears the Phosphoserine mark.

The protein belongs to the phosphatase and actin regulator family. As to quaternary structure, interacts (via RPEL repeats) with ACTA1 and PPP1CA; ACTA1 and PPP1CA compete for the same binding site.

Its subcellular location is the cytoplasm. It localises to the synapse. The protein localises to the nucleus. In terms of biological role, binds actin monomers (G actin) and plays a role in multiple processes including the regulation of actin cytoskeleton dynamics, actin stress fibers formation, cell motility and survival, formation of tubules by endothelial cells, and regulation of PPP1CA activity. Involved in the regulation of cortical neuron migration and dendrite arborization. The polypeptide is Phosphatase and actin regulator 1 (Phactr1) (Mus musculus (Mouse)).